We begin with the raw amino-acid sequence, 660 residues long: Peroxisomal acyl-coenzyme A oxidase 1 (660 aa).

Serine 26 is modified (phosphoserine). 2 positions are modified to N6-succinyllysine: lysine 89 and lysine 90. 2 residues coordinate FAD: threonine 139 and glycine 178. N6-acetyllysine is present on lysine 216. Lysine 241 bears the N6-succinyllysine mark. N6-acetyllysine is present on residues lysine 255, lysine 267, and lysine 272. Lysine 349 carries the N6-succinyllysine modification. The active-site Proton acceptor is the glutamate 421. N6-acetyllysine; alternate is present on residues lysine 437 and lysine 446. 2 positions are modified to N6-succinyllysine; alternate: lysine 437 and lysine 446. Lysine 500 and lysine 504 each carry N6-acetyllysine. The residue at position 512 (lysine 512) is an N6-acetyllysine; alternate. Lysine 512 carries the N6-succinyllysine; alternate modification. Lysine 542 is subject to N6-succinyllysine. Lysine 637 bears the N6-acetyllysine; alternate mark. Position 637 is an N6-succinyllysine; alternate (lysine 637). The residue at position 643 (lysine 643) is an N6-succinyllysine. Residue serine 649 is modified to Phosphoserine. Residue lysine 651 is modified to N6-acetyllysine. Lysine 654 carries the N6-succinyllysine modification. The Microbody targeting signal motif lies at serine 658–leucine 660.

Belongs to the acyl-CoA oxidase family. Homodimer. Interacts with LONP2. It depends on FAD as a cofactor. In terms of tissue distribution, widely expressed with highest levels of isoform 1 and isoform 2 detected in testis. Isoform 1 is expressed at higher levels than isoform 2 in liver and kidney while isoform 2 levels are higher in brain, lung, muscle, white adipose tissue and testis. Levels are almost equal in heart.

Its subcellular location is the peroxisome. The catalysed reaction is a 2,3-saturated acyl-CoA + O2 = a (2E)-enoyl-CoA + H2O2. The enzyme catalyses hexadecanoyl-CoA + O2 = (2E)-hexadecenoyl-CoA + H2O2. It catalyses the reaction dodecanoyl-CoA + O2 = (2E)-dodecenoyl-CoA + H2O2. It carries out the reaction octanoyl-CoA + O2 = (2E)-octenoyl-CoA + H2O2. The catalysed reaction is decanoyl-CoA + O2 = (2E)-decenoyl-CoA + H2O2. The enzyme catalyses tetradecanoyl-CoA + O2 = (2E)-tetradecenoyl-CoA + H2O2. It catalyses the reaction hexadecanedioyl-CoA + O2 = (2E)-hexadecenedioyl-CoA + H2O2. It carries out the reaction (5Z,8Z,11Z,14Z,17Z)-eicosapentaenoyl-CoA + O2 = (2E,5Z,8Z,11Z,14Z,17Z)-icosahexaenoyl-CoA + H2O2. The catalysed reaction is tetracosanoyl-CoA + O2 = (2E)-tetracosenoyl-CoA + H2O2. The enzyme catalyses glutaryl-CoA + O2 = (2E)-glutaconyl-CoA + H2O2. It catalyses the reaction hexanoyl-CoA + O2 = (2E)-hexenoyl-CoA + H2O2. It carries out the reaction octadecanoyl-CoA + O2 = (2E)-octadecenoyl-CoA + H2O2. The catalysed reaction is (6Z,9Z,12Z,15Z,18Z,21Z)-tetracosahexaenoyl-CoA + O2 = (2E,6Z,9Z,12Z,15Z,18Z,21Z)-tetracosaheptaenoyl-CoA + H2O2. It functions in the pathway lipid metabolism; peroxisomal fatty acid beta-oxidation. Its function is as follows. Involved in the initial and rate-limiting step of peroxisomal beta-oxidation of straight-chain saturated and unsaturated very-long-chain fatty acids. Catalyzes the desaturation of fatty acyl-CoAs such as palmitoyl-CoA (hexadecanoyl-CoA) to 2-trans-enoyl-CoAs ((2E)-enoyl-CoAs) such as (2E)-hexadecenoyl-CoA, and donates electrons directly to molecular oxygen (O(2)), thereby producing hydrogen peroxide (H(2)O(2)). In terms of biological role, shows highest activity against medium-chain fatty acyl-CoAs. Shows optimum activity with a chain length of 10 carbons (decanoyl-CoA) in vitro. Functionally, is active against a much broader range of substrates and shows activity towards long-chain fatty acyl-CoAs. In Homo sapiens (Human), this protein is Peroxisomal acyl-coenzyme A oxidase 1.